The primary structure comprises 219 residues: Redox-sensing transcriptional repressor Rex (219 aa).

Residues 17–56 constitute a DNA-binding region (H-T-H motif); sequence LYYRIFKRFHRENIVKTSSKQIAEAIGIDPATVRRDFSYF. Residue 91–96 participates in NAD(+) binding; that stretch reads GVGNIG.

Belongs to the transcriptional regulatory Rex family. Homodimer.

The protein localises to the cytoplasm. Functionally, modulates transcription in response to changes in cellular NADH/NAD(+) redox state. The protein is Redox-sensing transcriptional repressor Rex of Streptococcus thermophilus (strain ATCC BAA-491 / LMD-9).